A 678-amino-acid chain; its full sequence is DNA ligase (678 aa).

NAD(+)-binding positions include 34–38 (DSEYD), 83–84 (SL), and Glu114. Lys116 serves as the catalytic N6-AMP-lysine intermediate. 4 residues coordinate NAD(+): Arg137, Glu176, Lys293, and Lys317. The Zn(2+) site is built by Cys411, Cys414, Cys429, and Cys435. The BRCT domain maps to 594-678 (PTRQPLNGES…LMAGYGQTLS (85 aa)).

The protein belongs to the NAD-dependent DNA ligase family. LigA subfamily. Mg(2+) serves as cofactor. Mn(2+) is required as a cofactor.

The enzyme catalyses NAD(+) + (deoxyribonucleotide)n-3'-hydroxyl + 5'-phospho-(deoxyribonucleotide)m = (deoxyribonucleotide)n+m + AMP + beta-nicotinamide D-nucleotide.. Functionally, DNA ligase that catalyzes the formation of phosphodiester linkages between 5'-phosphoryl and 3'-hydroxyl groups in double-stranded DNA using NAD as a coenzyme and as the energy source for the reaction. It is essential for DNA replication and repair of damaged DNA. This Acinetobacter baumannii (strain SDF) protein is DNA ligase.